Consider the following 352-residue polypeptide: Photosystem II D2 protein (352 aa).

A helical membrane pass occupies residues 40–60 (CAFMALGGWLTGTTFVTSWYT). A chlorophyll a-binding site is contributed by histidine 117. The helical transmembrane segment at 124–140 (GFMLRQFEIARLVGIRP) threads the bilayer. Residues glutamine 129 and asparagine 142 each contribute to the pheophytin a site. A helical membrane pass occupies residues 152-165 (VFVSVFLMYPLGQS). Residue histidine 197 participates in chlorophyll a binding. A helical transmembrane segment spans residues 207–227 (GALLCAIHGATVENTLFEDSD). 2 residues coordinate a plastoquinone: histidine 214 and phenylalanine 261. Fe cation is bound at residue histidine 214. Histidine 268 is a binding site for Fe cation. The chain crosses the membrane as a helical span at residues 278–294 (GLWMSSVGIVGLALNLR).

This sequence belongs to the reaction center PufL/M/PsbA/D family. In terms of assembly, PSII is composed of 1 copy each of membrane proteins PsbA, PsbB, PsbC, PsbD, PsbE, PsbF, PsbH, PsbI, PsbJ, PsbK, PsbL, PsbM, PsbT, PsbX, PsbY, PsbZ, Psb30/Ycf12, peripheral proteins PsbO, CyanoQ (PsbQ), PsbU, PsbV and a large number of cofactors. It forms dimeric complexes. The cofactor is The D1/D2 heterodimer binds P680, chlorophylls that are the primary electron donor of PSII, and subsequent electron acceptors. It shares a non-heme iron and each subunit binds pheophytin, quinone, additional chlorophylls, carotenoids and lipids. There is also a Cl(-1) ion associated with D1 and D2, which is required for oxygen evolution. The PSII complex binds additional chlorophylls, carotenoids and specific lipids..

It is found in the cellular thylakoid membrane. The enzyme catalyses 2 a plastoquinone + 4 hnu + 2 H2O = 2 a plastoquinol + O2. Functionally, photosystem II (PSII) is a light-driven water:plastoquinone oxidoreductase that uses light energy to abstract electrons from H(2)O, generating O(2) and a proton gradient subsequently used for ATP formation. It consists of a core antenna complex that captures photons, and an electron transfer chain that converts photonic excitation into a charge separation. The D1/D2 (PsbA/PsbD) reaction center heterodimer binds P680, the primary electron donor of PSII as well as several subsequent electron acceptors. D2 is needed for assembly of a stable PSII complex. This chain is Photosystem II D2 protein, found in Picosynechococcus sp. (strain ATCC 27264 / PCC 7002 / PR-6) (Agmenellum quadruplicatum).